Reading from the N-terminus, the 277-residue chain is Ribosomal RNA small subunit methyltransferase A (277 aa).

S-adenosyl-L-methionine-binding residues include Asn-23, Leu-25, Gly-50, Glu-75, Asp-98, and Asn-121.

This sequence belongs to the class I-like SAM-binding methyltransferase superfamily. rRNA adenine N(6)-methyltransferase family. RsmA subfamily.

Its subcellular location is the cytoplasm. It catalyses the reaction adenosine(1518)/adenosine(1519) in 16S rRNA + 4 S-adenosyl-L-methionine = N(6)-dimethyladenosine(1518)/N(6)-dimethyladenosine(1519) in 16S rRNA + 4 S-adenosyl-L-homocysteine + 4 H(+). In terms of biological role, specifically dimethylates two adjacent adenosines (A1518 and A1519) in the loop of a conserved hairpin near the 3'-end of 16S rRNA in the 30S particle. May play a critical role in biogenesis of 30S subunits. This chain is Ribosomal RNA small subunit methyltransferase A, found in Paraburkholderia xenovorans (strain LB400).